Reading from the N-terminus, the 217-residue chain is UPF0319 protein HSM_0266 (217 aa).

The first 21 residues, 1–21, serve as a signal peptide directing secretion; the sequence is MKFSFAALASAMLLTSTAAFA.

The protein belongs to the UPF0319 family.

This is UPF0319 protein HSM_0266 from Histophilus somni (strain 2336) (Haemophilus somnus).